The following is a 364-amino-acid chain: Oxidized polyvinyl alcohol hydrolase (364 aa).

Positions 1–34 (MFKPVVKSRSSRSFCYLAGCLAMVAATLSSTAQA) are cleaved as a signal peptide. Catalysis depends on charge relay system residues serine 190 and serine 293.

The protein belongs to the peptidase S9A family. Monomer.

The protein localises to the periplasm. The enzyme catalyses nonane-4,6-dione + H2O = pentan-2-one + butanoate + H(+). Functionally, catalyzes the hydrolysis of 4,6-nonanedione, a beta-diketone compound. Also mediates hydrolysis of oxidized polyvinyl alcohol (PVA) in the second step in the degradation of polyvinyl alcohol. Not active toward the monoketone structure. In Sphingopyxis sp. (strain 113P3), this protein is Oxidized polyvinyl alcohol hydrolase (oph).